The chain runs to 415 residues: Gamma-glutamyl phosphate reductase (415 aa).

Belongs to the gamma-glutamyl phosphate reductase family.

The protein resides in the cytoplasm. It catalyses the reaction L-glutamate 5-semialdehyde + phosphate + NADP(+) = L-glutamyl 5-phosphate + NADPH + H(+). It functions in the pathway amino-acid biosynthesis; L-proline biosynthesis; L-glutamate 5-semialdehyde from L-glutamate: step 2/2. Catalyzes the NADPH-dependent reduction of L-glutamate 5-phosphate into L-glutamate 5-semialdehyde and phosphate. The product spontaneously undergoes cyclization to form 1-pyrroline-5-carboxylate. The polypeptide is Gamma-glutamyl phosphate reductase (Mycolicibacterium gilvum (strain PYR-GCK) (Mycobacterium gilvum (strain PYR-GCK))).